The following is a 582-amino-acid chain: NAB transcription cofactor mab-10 (582 aa).

The span at 1–70 (MSSSSSSSLP…SSSSQRQSTS (70 aa)) shows a compositional bias: low complexity. Disordered regions lie at residues 1 to 84 (MSSS…MPTP), 257 to 287 (SDQQ…PAGI), 333 to 365 (PPSS…SPFL), and 516 to 582 (SRKR…LPES). The NCD1 stretch occupies residues 83–161 (TPTTLSEWQL…EYSQDQTAFN (79 aa)). Composition is skewed to low complexity over residues 257–276 (SDQQ…STSS) and 333–345 (PPSS…PSTS). The tract at residues 396 to 519 (LSTAQISRLA…GYNYAKSRKR (124 aa)) is NCD2. Residues 573-582 (EKMKGELPES) show a composition bias toward basic and acidic residues.

Belongs to the NAB family. Interacts with transcription factor lin-29 (via C-terminus).

The protein localises to the nucleus. Transcriptional cofactor. Heterochronic protein, involved in timing of a subset of differentiation events during the larval-to-adult transition. Promotes hypodermal terminal differentiation, together with transcription factor lin-29, perhaps as part of a transcriptional complex. Involved in regulating molting by repressing the expression of nuclear hormone receptors nhr-23 and nhr-25 in the adult hypoderm, probably acting in concert with lin-29. The sequence is that of NAB transcription cofactor mab-10 from Caenorhabditis elegans.